The following is a 208-amino-acid chain: Pyrophosphate-energized proton pump 2 (208 aa).

The next 5 membrane-spanning stretches (helical) occupy residues 19-39 (AYPL…TFFV), 54-74 (GLIV…SFTI), 89-109 (GGNL…IVVI), 140-160 (LAVS…GIIA), and 167-187 (LFGT…IVAL).

Belongs to the H(+)-translocating pyrophosphatase (TC 3.A.10) family. Homodimer. The cofactor is Mg(2+).

It localises to the cell inner membrane. The catalysed reaction is diphosphate + H2O + H(+)(in) = 2 phosphate + 2 H(+)(out). In terms of biological role, proton pump that utilizes the energy of pyrophosphate hydrolysis as the driving force for proton movement across the membrane. Generates a proton motive force. This Mycoplana dimorpha protein is Pyrophosphate-energized proton pump 2 (hppA2).